The chain runs to 208 residues: FMN-dependent NADH:quinone oxidoreductase 4 (208 aa).

Belongs to the azoreductase type 1 family. As to quaternary structure, homodimer. Requires FMN as cofactor.

It catalyses the reaction 2 a quinone + NADH + H(+) = 2 a 1,4-benzosemiquinone + NAD(+). The enzyme catalyses N,N-dimethyl-1,4-phenylenediamine + anthranilate + 2 NAD(+) = 2-(4-dimethylaminophenyl)diazenylbenzoate + 2 NADH + 2 H(+). Functionally, quinone reductase that provides resistance to thiol-specific stress caused by electrophilic quinones. Also exhibits azoreductase activity. Catalyzes the reductive cleavage of the azo bond in aromatic azo compounds to the corresponding amines. The sequence is that of FMN-dependent NADH:quinone oxidoreductase 4 from Bacillus anthracis.